The following is a 392-amino-acid chain: Succinate--CoA ligase [ADP-forming] subunit beta (392 aa).

An ATP-grasp domain is found at 9 to 248 (KGLFRDYGVS…LHEEDPTEVK (240 aa)). ATP is bound by residues K50, 57–59 (GRG), V106, and E111. Mg(2+) is bound by residues N203 and D217. Residues N268 and 325–327 (GIV) each bind substrate.

The protein belongs to the succinate/malate CoA ligase beta subunit family. In terms of assembly, heterotetramer of two alpha and two beta subunits. The cofactor is Mg(2+).

It carries out the reaction succinate + ATP + CoA = succinyl-CoA + ADP + phosphate. The enzyme catalyses GTP + succinate + CoA = succinyl-CoA + GDP + phosphate. Its pathway is carbohydrate metabolism; tricarboxylic acid cycle; succinate from succinyl-CoA (ligase route): step 1/1. Its function is as follows. Succinyl-CoA synthetase functions in the citric acid cycle (TCA), coupling the hydrolysis of succinyl-CoA to the synthesis of either ATP or GTP and thus represents the only step of substrate-level phosphorylation in the TCA. The beta subunit provides nucleotide specificity of the enzyme and binds the substrate succinate, while the binding sites for coenzyme A and phosphate are found in the alpha subunit. This chain is Succinate--CoA ligase [ADP-forming] subunit beta, found in Salinibacter ruber (strain DSM 13855 / M31).